A 99-amino-acid chain; its full sequence is Large ribosomal subunit protein uL23 (99 aa).

It belongs to the universal ribosomal protein uL23 family. As to quaternary structure, part of the 50S ribosomal subunit. Contacts protein L29, and trigger factor when it is bound to the ribosome.

Its function is as follows. One of the early assembly proteins it binds 23S rRNA. One of the proteins that surrounds the polypeptide exit tunnel on the outside of the ribosome. Forms the main docking site for trigger factor binding to the ribosome. The sequence is that of Large ribosomal subunit protein uL23 from Stenotrophomonas maltophilia (strain R551-3).